The following is a 175-amino-acid chain: NADH-ubiquinone oxidoreductase chain 6 (175 aa).

5 helical membrane passes run 1–21 (MMTY…VGFS), 27–47 (VYGG…VMNF), 49–69 (GSFL…VVFG), 88–108 (VVLG…LYVL), and 149–169 (YGVW…VVIM).

Belongs to the complex I subunit 6 family. As to quaternary structure, core subunit of respiratory chain NADH dehydrogenase (Complex I) which is composed of 45 different subunits.

Its subcellular location is the mitochondrion inner membrane. The enzyme catalyses a ubiquinone + NADH + 5 H(+)(in) = a ubiquinol + NAD(+) + 4 H(+)(out). In terms of biological role, core subunit of the mitochondrial membrane respiratory chain NADH dehydrogenase (Complex I) which catalyzes electron transfer from NADH through the respiratory chain, using ubiquinone as an electron acceptor. Essential for the catalytic activity and assembly of complex I. In Pteropus dasymallus (Ryukyu flying fox), this protein is NADH-ubiquinone oxidoreductase chain 6 (MT-ND6).